Reading from the N-terminus, the 532-residue chain is Copalyl diphosphate synthase (532 aa).

Residues 313-318 (DTDDTA) carry the DXDDTA motif motif. The QXXDGSW motif signature appears at 443-449 (QSDDGSW).

Belongs to the terpene synthase family. Mg(2+) is required as a cofactor.

The enzyme catalyses (2E,6E,10E)-geranylgeranyl diphosphate = (+)-copalyl diphosphate. Involved in the biosynthesis of the mercapturic acid derivative diterpene cyslabdan A, a potentiator of the beta-lactam antibiotic imipenem. Catalyzes the conversion of geranylgeranyl diphosphate (GGDP) into (+)-copalyl diphosphate. This chain is Copalyl diphosphate synthase, found in Streptomyces cyslabdanicus.